Reading from the N-terminus, the 151-residue chain is MTVTTERIARIIESKEIMTLLPHRYPFLLVDRVTDYEEGKWLTAIKNVSVNEPCFTGHFPDQPILPGVLILEALAQAMGILAFKTHELSNKELFYFAGVDEARFKRPILPGDQMMLKVEVIRERRGITAFTGVASVNGEVACEAKLMCARR.

H58 is a catalytic residue.

The protein belongs to the thioester dehydratase family. FabZ subfamily.

Its subcellular location is the cytoplasm. It catalyses the reaction a (3R)-hydroxyacyl-[ACP] = a (2E)-enoyl-[ACP] + H2O. Functionally, involved in unsaturated fatty acids biosynthesis. Catalyzes the dehydration of short chain beta-hydroxyacyl-ACPs and long chain saturated and unsaturated beta-hydroxyacyl-ACPs. The chain is 3-hydroxyacyl-[acyl-carrier-protein] dehydratase FabZ from Histophilus somni (strain 129Pt) (Haemophilus somnus).